The primary structure comprises 322 residues: Tropinone reductase homolog At2g29260, chloroplastic (322 aa).

The transit peptide at 1–61 (MVLDMASHLY…YASQSSIAIT (61 aa)) directs the protein to the chloroplast. 74–98 (LVTGGTRGIGRAIVEELAGLGAEVH) contacts NADP(+). Ser-207 contacts substrate.

Belongs to the short-chain dehydrogenases/reductases (SDR) family. SDR65C subfamily.

It is found in the plastid. The protein resides in the chloroplast. This Arabidopsis thaliana (Mouse-ear cress) protein is Tropinone reductase homolog At2g29260, chloroplastic.